The primary structure comprises 445 residues: Glutamyl-tRNA reductase (445 aa).

Residues 49 to 52, serine 109, 114 to 116, and glutamine 120 contribute to the substrate site; these read TCNR and ETQ. The active-site Nucleophile is the cysteine 50. An NADP(+)-binding site is contributed by 189–194; it reads GAGEMS.

This sequence belongs to the glutamyl-tRNA reductase family. In terms of assembly, homodimer.

The catalysed reaction is (S)-4-amino-5-oxopentanoate + tRNA(Glu) + NADP(+) = L-glutamyl-tRNA(Glu) + NADPH + H(+). The protein operates within porphyrin-containing compound metabolism; protoporphyrin-IX biosynthesis; 5-aminolevulinate from L-glutamyl-tRNA(Glu): step 1/2. Catalyzes the NADPH-dependent reduction of glutamyl-tRNA(Glu) to glutamate 1-semialdehyde (GSA). The protein is Glutamyl-tRNA reductase of Staphylococcus carnosus (strain TM300).